Reading from the N-terminus, the 61-residue chain is Small ribosomal subunit protein uS14 (61 aa).

Zn(2+)-binding residues include Cys24, Cys27, Cys40, and Cys43.

The protein belongs to the universal ribosomal protein uS14 family. Zinc-binding uS14 subfamily. In terms of assembly, part of the 30S ribosomal subunit. Contacts proteins S3 and S10. Zn(2+) is required as a cofactor.

In terms of biological role, binds 16S rRNA, required for the assembly of 30S particles and may also be responsible for determining the conformation of the 16S rRNA at the A site. The chain is Small ribosomal subunit protein uS14 from Streptococcus equi subsp. zooepidemicus (strain H70).